Consider the following 155-residue polypeptide: Ribosome maturation factor RimP (155 aa).

It belongs to the RimP family.

Its subcellular location is the cytoplasm. Functionally, required for maturation of 30S ribosomal subunits. The sequence is that of Ribosome maturation factor RimP from Prochlorococcus marinus (strain MIT 9515).